A 108-amino-acid chain; its full sequence is Large ribosomal subunit protein uL24 (108 aa).

Belongs to the universal ribosomal protein uL24 family. As to quaternary structure, part of the 50S ribosomal subunit.

In terms of biological role, one of two assembly initiator proteins, it binds directly to the 5'-end of the 23S rRNA, where it nucleates assembly of the 50S subunit. Functionally, one of the proteins that surrounds the polypeptide exit tunnel on the outside of the subunit. The chain is Large ribosomal subunit protein uL24 from Geobacter metallireducens (strain ATCC 53774 / DSM 7210 / GS-15).